The chain runs to 360 residues: tRNA (guanine(9)-N1)-methyltransferase (360 aa).

The segment at 1–77 (MENQDTEQSQ…RRKERIKEAE (77 aa)) is disordered. Basic and acidic residues-rich tracts occupy residues 8 to 24 (QSQKRSGSEVEKDDFKR) and 33 to 55 (MTKREYKRQLKQQRWEETKDEYK). Residues 56–67 (QKKREKKKAARE) show a composition bias toward basic residues. A compositionally biased stretch (basic and acidic residues) spans 68–77 (RRKERIKEAE). An SAM-dependent MTase TRM10-type domain is found at 94 to 293 (RAKVAPQEQI…EVLPPRKVKG (200 aa)). Residues 199 to 200 (LT), Gly-219, 223 to 227 (DKNRY), Cys-231, Leu-245, and 257 to 259 (QVL) each bind S-adenosyl-L-methionine. Residue Asp-223 is the Proton acceptor of the active site. The segment at 291 to 360 (VKGKLTHGSD…SDEPSKGADH (70 aa)) is disordered. Over residues 297–306 (HGSDPEKSIE) the composition is skewed to basic and acidic residues. The span at 307–324 (PSEVSEQPVSSEQSEQPV) shows a compositional bias: low complexity. Residues 328 to 343 (QPVSSEQPVLSEQPVL) are compositionally biased toward polar residues.

The protein belongs to the class IV-like SAM-binding methyltransferase superfamily. TRM10 family. Monomer.

It localises to the cytoplasm. The protein resides in the nucleus. The catalysed reaction is guanosine(9) in tRNA + S-adenosyl-L-methionine = N(1)-methylguanosine(9) in tRNA + S-adenosyl-L-homocysteine + H(+). In terms of biological role, S-adenosyl-L-methionine-dependent guanine N(1)-methyltransferase that catalyzes the formation of N(1)-methylguanine at position 9 (m1G9) in cytoplasmic tRNA. This Debaryomyces hansenii (strain ATCC 36239 / CBS 767 / BCRC 21394 / JCM 1990 / NBRC 0083 / IGC 2968) (Yeast) protein is tRNA (guanine(9)-N1)-methyltransferase.